Reading from the N-terminus, the 465-residue chain is Glycine--tRNA ligase (465 aa).

Substrate contacts are provided by R98 and E174. Residues 206-208, 216-221, 290-291, and 334-337 each bind ATP; these read RNE, FRTREF, EL, and GADR. Residue 221–225 coordinates substrate; sequence FEQME. Residue 330-334 participates in substrate binding; that stretch reads EPSLG.

This sequence belongs to the class-II aminoacyl-tRNA synthetase family. In terms of assembly, homodimer.

The protein resides in the cytoplasm. It catalyses the reaction tRNA(Gly) + glycine + ATP = glycyl-tRNA(Gly) + AMP + diphosphate. Catalyzes the attachment of glycine to tRNA(Gly). This chain is Glycine--tRNA ligase, found in Agathobacter rectalis (strain ATCC 33656 / DSM 3377 / JCM 17463 / KCTC 5835 / VPI 0990) (Eubacterium rectale).